The chain runs to 232 residues: Ribonuclease 3 (232 aa).

The 128-residue stretch at 6-133 (LKEIEENLGV…IIAAVYLDKG (128 aa)) folds into the RNase III domain. Glu-46 serves as a coordination point for Mg(2+). Residue Asp-50 is part of the active site. 2 residues coordinate Mg(2+): Asp-119 and Glu-122. Glu-122 is an active-site residue. The DRBM domain maps to 160 to 229 (DFKTKLQELL…AKQALDILEG (70 aa)).

The protein belongs to the ribonuclease III family. Homodimer. Mg(2+) serves as cofactor.

It localises to the cytoplasm. The catalysed reaction is Endonucleolytic cleavage to 5'-phosphomonoester.. Functionally, digests double-stranded RNA. Involved in the processing of primary rRNA transcript to yield the immediate precursors to the large and small rRNAs (23S and 16S). Processes some mRNAs, and tRNAs when they are encoded in the rRNA operon. Processes pre-crRNA and tracrRNA of type II CRISPR loci if present in the organism. This chain is Ribonuclease 3, found in Clostridium beijerinckii (strain ATCC 51743 / NCIMB 8052) (Clostridium acetobutylicum).